Consider the following 872-residue polypeptide: DNA mismatch repair protein MutS (872 aa).

Residue G632 to S639 coordinates ATP.

Belongs to the DNA mismatch repair MutS family.

Its function is as follows. This protein is involved in the repair of mismatches in DNA. It is possible that it carries out the mismatch recognition step. This protein has a weak ATPase activity. The protein is DNA mismatch repair protein MutS of Colwellia psychrerythraea (strain 34H / ATCC BAA-681) (Vibrio psychroerythus).